Here is a 623-residue protein sequence, read N- to C-terminus: Serine/threonine-protein kinase ArnS (623 aa).

2 helical membrane passes run Met13–Leu33 and Val49–Ile69. Residues Tyr317–Gly623 form the Protein kinase domain. Residues Ile323–Val331 and Lys344 contribute to the ATP site. Asp460 serves as the catalytic Proton acceptor.

This sequence belongs to the protein kinase superfamily. Ser/Thr protein kinase family. Post-translationally, autophosphorylated.

Its subcellular location is the cell membrane. It catalyses the reaction L-seryl-[protein] + ATP = O-phospho-L-seryl-[protein] + ADP + H(+). It carries out the reaction L-threonyl-[protein] + ATP = O-phospho-L-threonyl-[protein] + ADP + H(+). With respect to regulation, autophosphorylation is stimulated by Mn(2+). Its function is as follows. Plays an essential role in the controlled expression of archaellum components during starvation-induced motility. May inhibit arnR transcription and promote ArnR translation. The chain is Serine/threonine-protein kinase ArnS from Sulfolobus acidocaldarius (strain ATCC 33909 / DSM 639 / JCM 8929 / NBRC 15157 / NCIMB 11770).